Here is a 337-residue protein sequence, read N- to C-terminus: Ribosomal RNA small subunit methyltransferase H (337 aa).

S-adenosyl-L-methionine contacts are provided by residues 45–47 (GGH), aspartate 64, phenylalanine 91, aspartate 120, and glutamine 127.

The protein belongs to the methyltransferase superfamily. RsmH family.

The protein resides in the cytoplasm. It catalyses the reaction cytidine(1402) in 16S rRNA + S-adenosyl-L-methionine = N(4)-methylcytidine(1402) in 16S rRNA + S-adenosyl-L-homocysteine + H(+). Specifically methylates the N4 position of cytidine in position 1402 (C1402) of 16S rRNA. The protein is Ribosomal RNA small subunit methyltransferase H of Corynebacterium glutamicum (strain R).